We begin with the raw amino-acid sequence, 684 residues long: Translation factor GUF1 homolog, mitochondrial (684 aa).

A tr-type G domain is found at 82–270 (HLIRNFSIIA…AVIERIPQPK (189 aa)). GTP-binding positions include 91–98 (AHVDHGKS), 163–167 (DTPGH), and 217–220 (NKID).

This sequence belongs to the TRAFAC class translation factor GTPase superfamily. Classic translation factor GTPase family. LepA subfamily.

It is found in the mitochondrion inner membrane. The catalysed reaction is GTP + H2O = GDP + phosphate + H(+). Promotes mitochondrial protein synthesis. May act as a fidelity factor of the translation reaction, by catalyzing a one-codon backward translocation of tRNAs on improperly translocated ribosomes. Binds to mitochondrial ribosomes in a GTP-dependent manner. This is Translation factor GUF1 homolog, mitochondrial from Physcomitrium patens (Spreading-leaved earth moss).